Here is a 194-residue protein sequence, read N- to C-terminus: Thymidine kinase (194 aa).

Residues 15–22 and 88–91 contribute to the ATP site; these read GSMFSGKS and DEVQ. The active-site Proton acceptor is Glu89. Residues Cys145, Cys148, Cys183, and Cys186 each coordinate Zn(2+).

This sequence belongs to the thymidine kinase family. As to quaternary structure, homotetramer.

The protein resides in the cytoplasm. The catalysed reaction is thymidine + ATP = dTMP + ADP + H(+). This chain is Thymidine kinase, found in Bacillus anthracis (strain A0248).